The following is a 118-amino-acid chain: Autophagy-related protein 8D (118 aa).

Gly-118 carries Phosphatidylethanolamine amidated glycine lipidation.

Belongs to the ATG8 family. Interacts with ATG4. The C-terminal Gly is amidated with phosphatidylethanolamine by an activating system similar to that for ubiquitin.

It is found in the cytoplasmic vesicle. The protein resides in the autophagosome membrane. It localises to the vacuole membrane. Its subcellular location is the cytoplasm. The protein localises to the cytoskeleton. Its function is as follows. Ubiquitin-like modifier involved in autophagosomes formation. May mediate the delivery of the autophagosomes to the vacuole via the microtubule cytoskeleton. The chain is Autophagy-related protein 8D (ATG8D) from Oryza sativa subsp. japonica (Rice).